The chain runs to 864 residues: MATNGHFATIGVDNDKTAYEHGVQVIDENKEFNPNISKYLSLENVTPAGFNYHLISVFGSQSTGKSTLLNHLFGTHFSVMSDSERRQTTKGIWMSKNKKEGEATVDPTLRMADNILVMDVEGTDGRERGEDQDFERKSALFALATSEVLIVNIWEHQVGLYQGANMGLLKTVFEVNLQLFLKDKNTTHRSLLFFVIRDFVGATPLKNLQKTLMEDMARLWESISKPPGLESSSVHDYFDFQFYGLPHKSYQPEQFVAETKKLSLRFREGQRDPSMDARRGEFSEGGVFLPEYHRRIPADGFSRYAEGIWDQIVNNKDLDLPTQQELLAQFRCDEILREVMIAFDEAIVPFEEKQSQSARLGEPEVLGGLGAAMRSSRAKAVKNFETEASRYHKGVYQRKRAELESKVDTRLKALLQGQLNAAHKSGINEFSEAVSSSVKSGQKQGTGYDFAEIVNEEVKKAIAKFEDVARSTVVEGTTWSDYKQELALYEKELADVSGRLRREEMRRLANRVERWVQSRLGESVGLEFNALGSGRAGGGAPETGEKPLEKAFWDRVWNVFVETVLDAERRFTDRASSFDASLEEVDVGLWRLRRKSWGVLRAKIDEEMTEGNLLLKLRENFEDKFRYDDAGVPRIWRPTDDIEGIYTRARESTLTLIPLLSRFRLAETSAPPPLDRWIGHTPSSATPADEEDLPPIGGVDEEEGKSLDEEMMILSEAKRQELTVRFKKAADGVYVEAKRSAIGGMTQVPLYFYGLLLALGWNEIIAVLRNPAYFFLLFVCAVGAYVTYQLNLWGPIIKMTEAASSQALVEGKKRLREFLESSDTGRQAIAMSAGSGRSGEQYELSDLSKKGKARTSADEDMDDL.

Over Met-1–Gln-747 the chain is Cytoplasmic. A GB1/RHD3-type G domain is found at Gly-49–Ala-305. Gly-59–Ser-66 lines the GTP pocket. Residues Ser-480–Arg-506 adopt a coiled-coil conformation. Residues Asp-675–Glu-701 form a disordered region. Residues Ala-688 to Glu-701 are compositionally biased toward acidic residues. A helical transmembrane segment spans residues Val-748–Leu-768. At Arg-769–Pro-771 the chain is on the lumenal side. Residues Ala-772 to Leu-792 form a helical membrane-spanning segment. Residues Trp-793 to Leu-864 lie on the Cytoplasmic side of the membrane. The tract at residues Ala-830–Leu-864 is disordered.

It belongs to the TRAFAC class dynamin-like GTPase superfamily. GB1/RHD3 GTPase family. RHD3 subfamily.

The protein resides in the endoplasmic reticulum membrane. Cooperates with the reticulon proteins and tubule-shaping DP1 family proteins to generate and maintain the structure of the tubular endoplasmic reticulum network. Has GTPase activity, which is required for its function in ER organization. This Neosartorya fischeri (strain ATCC 1020 / DSM 3700 / CBS 544.65 / FGSC A1164 / JCM 1740 / NRRL 181 / WB 181) (Aspergillus fischerianus) protein is Protein sey1 (sey1).